The primary structure comprises 315 residues: Outer membrane protease IcsP (315 aa).

The first 20 residues, M1 to A20, serve as a signal peptide directing secretion. Catalysis depends on residues D103, D105, D230, and H232.

It belongs to the peptidase A26 family.

It is found in the cell outer membrane. Protease responsible for the cleavage of IcsA between 'Arg-758' and 'Arg-759', removing the entire alpha domain from IscA localized on the bacterial surface. This proteolytic activity contributes to the maintenance of a tight polar cap of IcsA, which is important to Shigella actin-based motility. The sequence is that of Outer membrane protease IcsP (icsP) from Shigella flexneri.